Consider the following 638-residue polypeptide: 1-deoxy-D-xylulose-5-phosphate synthase (638 aa).

Residues His79 and 120–122 each bind thiamine diphosphate; that span reads AHS. Mg(2+) is bound at residue Asp151. Thiamine diphosphate is bound by residues 152–153, Asn180, Tyr289, and Glu371; that span reads GA. Asn180 serves as a coordination point for Mg(2+).

This sequence belongs to the transketolase family. DXPS subfamily. Homodimer. It depends on Mg(2+) as a cofactor. Thiamine diphosphate is required as a cofactor.

It catalyses the reaction D-glyceraldehyde 3-phosphate + pyruvate + H(+) = 1-deoxy-D-xylulose 5-phosphate + CO2. It functions in the pathway metabolic intermediate biosynthesis; 1-deoxy-D-xylulose 5-phosphate biosynthesis; 1-deoxy-D-xylulose 5-phosphate from D-glyceraldehyde 3-phosphate and pyruvate: step 1/1. Functionally, catalyzes the acyloin condensation reaction between C atoms 2 and 3 of pyruvate and glyceraldehyde 3-phosphate to yield 1-deoxy-D-xylulose-5-phosphate (DXP). In Rhizobium rhizogenes (strain K84 / ATCC BAA-868) (Agrobacterium radiobacter), this protein is 1-deoxy-D-xylulose-5-phosphate synthase.